A 196-amino-acid polypeptide reads, in one-letter code: Molybdenum cofactor guanylyltransferase (196 aa).

Residues Leu-10–Gly-12, Lys-23, Asn-51, Asp-69, and Asp-99 contribute to the GTP site. Asp-99 contributes to the Mg(2+) binding site.

This sequence belongs to the MobA family. In terms of assembly, monomer. Mg(2+) serves as cofactor.

It is found in the cytoplasm. The enzyme catalyses Mo-molybdopterin + GTP + H(+) = Mo-molybdopterin guanine dinucleotide + diphosphate. Its function is as follows. Transfers a GMP moiety from GTP to Mo-molybdopterin (Mo-MPT) cofactor (Moco or molybdenum cofactor) to form Mo-molybdopterin guanine dinucleotide (Mo-MGD) cofactor. The polypeptide is Molybdenum cofactor guanylyltransferase (Shewanella baltica (strain OS185)).